Consider the following 309-residue polypeptide: UDP-N-acetylenolpyruvoylglucosamine reductase (309 aa).

Positions 24-187 (RVGGPADWLF…TKAVFEAPRG (164 aa)) constitute an FAD-binding PCMH-type domain. Arginine 167 is a catalytic residue. Over residues 200 to 213 (LARRDATQPTKERS) the composition is skewed to basic and acidic residues. Residues 200–230 (LARRDATQPTKERSAGSTFRNPAGFSSTGRS) form a disordered region. Residues 214 to 228 (AGSTFRNPAGFSSTG) show a composition bias toward polar residues. Serine 216 functions as the Proton donor in the catalytic mechanism. Residue glutamate 298 is part of the active site.

Belongs to the MurB family. The cofactor is FAD.

The protein localises to the cytoplasm. It carries out the reaction UDP-N-acetyl-alpha-D-muramate + NADP(+) = UDP-N-acetyl-3-O-(1-carboxyvinyl)-alpha-D-glucosamine + NADPH + H(+). It participates in cell wall biogenesis; peptidoglycan biosynthesis. Functionally, cell wall formation. The chain is UDP-N-acetylenolpyruvoylglucosamine reductase from Roseobacter denitrificans (strain ATCC 33942 / OCh 114) (Erythrobacter sp. (strain OCh 114)).